The primary structure comprises 180 residues: HTH-type transcriptional regulator EcpR (180 aa).

The 59-residue stretch at 122–180 (KDIKKDKITDREMKIIRMTAQGMQPKSIARIENCSVKTVYTHRRNAEAKLYSKIYKLVQ) folds into the HTH luxR-type domain. A DNA-binding region (H-T-H motif) is located at residues 146 to 165 (PKSIARIENCSVKTVYTHRR).

This sequence belongs to the EcpR/MatA family.

The protein resides in the cytoplasm. In terms of biological role, part of the ecpRABCDE operon, which encodes the E.coli common pilus (ECP). ECP plays a dual role in early-stage biofilm development and host cell recognition. Positively regulates the expression of the ecp operon. The chain is HTH-type transcriptional regulator EcpR (ecpR) from Klebsiella pneumoniae subsp. pneumoniae (strain ATCC 700721 / MGH 78578).